The sequence spans 105 residues: Blood plasma apolipoprotein LAL1 (105 aa).

An N-terminal signal peptide occupies residues Met1–Ser21. Residues Glu22–Ser29 constitute a propeptide that is removed on maturation.

In terms of tissue distribution, plasma.

The protein localises to the secreted. This chain is Blood plasma apolipoprotein LAL1, found in Petromyzon marinus (Sea lamprey).